The sequence spans 158 residues: MGIEGVLKEGFVTTSVDTLINWSKTGSLWPMTFGLACCAVEMMHAGASRYDIDRFGMLFRPSPRQSDLMIVAGTLCNKMAPALRKVYDQMAEPRWVLSMGSCANGGGYYHYSYSVVRGCDRVVPVDVYVPGCPPTAEALLYGILQLQAKIRRENTIAR.

Cys-37, Cys-38, Cys-102, and Cys-132 together coordinate [4Fe-4S] cluster.

The protein belongs to the complex I 20 kDa subunit family. In terms of assembly, NDH-1 is composed of 14 different subunits. Subunits NuoB, C, D, E, F, and G constitute the peripheral sector of the complex. It depends on [4Fe-4S] cluster as a cofactor.

The protein localises to the cell inner membrane. The enzyme catalyses a quinone + NADH + 5 H(+)(in) = a quinol + NAD(+) + 4 H(+)(out). NDH-1 shuttles electrons from NADH, via FMN and iron-sulfur (Fe-S) centers, to quinones in the respiratory chain. Couples the redox reaction to proton translocation (for every two electrons transferred, four hydrogen ions are translocated across the cytoplasmic membrane), and thus conserves the redox energy in a proton gradient. This chain is NADH-quinone oxidoreductase subunit B, found in Leptothrix cholodnii (strain ATCC 51168 / LMG 8142 / SP-6) (Leptothrix discophora (strain SP-6)).